A 303-amino-acid chain; its full sequence is uncharacterized protein (303 aa).

Disordered regions lie at residues 1–89 and 132–159; these read MTSP…NVRS and SELP…STPR. Positions 61-89 are enriched in polar residues; it reads RASQSGYRPSDPLTTTRQSNPAPGANVRS. The next 2 helical transmembrane spans lie at 205–225 and 264–284; these read LLLS…LYLL and VLVG…AAFV.

The protein to M.tuberculosis Rv0007.

It localises to the cell membrane. This is an uncharacterized protein from Mycobacterium leprae (strain TN).